Reading from the N-terminus, the 123-residue chain is Cytochrome b-c1 complex subunit 7 (123 aa).

Belongs to the UQCRB/QCR7 family. As to quaternary structure, component of the ubiquinol-cytochrome c oxidoreductase (cytochrome b-c1 complex, complex III, CIII), a multisubunit enzyme composed of 3 respiratory subunits cytochrome b, cytochrome c1 and Rieske protein, 2 core protein subunits, and additional low-molecular weight protein subunits. The complex exists as an obligatory dimer and forms supercomplexes (SCs) in the inner mitochondrial membrane with cytochrome c oxidase (complex IV, CIV). Post-translationally, the N-terminus is blocked.

The protein localises to the mitochondrion inner membrane. In terms of biological role, component of the ubiquinol-cytochrome c oxidoreductase, a multisubunit transmembrane complex that is part of the mitochondrial electron transport chain which drives oxidative phosphorylation. The respiratory chain contains 3 multisubunit complexes succinate dehydrogenase (complex II, CII), ubiquinol-cytochrome c oxidoreductase (cytochrome b-c1 complex, complex III, CIII) and cytochrome c oxidase (complex IV, CIV), that cooperate to transfer electrons derived from NADH and succinate to molecular oxygen, creating an electrochemical gradient over the inner membrane that drives transmembrane transport and the ATP synthase. The cytochrome b-c1 complex catalyzes electron transfer from ubiquinol to cytochrome c, linking this redox reaction to translocation of protons across the mitochondrial inner membrane, with protons being carried across the membrane as hydrogens on the quinol. In the process called Q cycle, 2 protons are consumed from the matrix, 4 protons are released into the intermembrane space and 2 electrons are passed to cytochrome c. The chain is Cytochrome b-c1 complex subunit 7 from Solanum tuberosum (Potato).